The primary structure comprises 411 residues: Efflux pump periplasmic linker BepF (411 aa).

Residues 118 to 196 (FVLQKDALQA…SLEQAQINLG (79 aa)) are a coiled coil.

This sequence belongs to the membrane fusion protein (MFP) (TC 8.A.1) family. Probably part of a tripartite efflux pump, which is composed of an outer membrane efflux protein, an inner membrane protein and a protein that expands the periplasmic space. Could form a tripartite pump with BepC and BepG.

It is found in the periplasm. May contribute to resistance to some drugs, such as deoxycholate, sodium dodecyl sulfate and nalidixic acid, in the absence of BepD and BepE. The sequence is that of Efflux pump periplasmic linker BepF (bepF) from Brucella suis biovar 1 (strain 1330).